We begin with the raw amino-acid sequence, 310 residues long: tRNA uridine(34) hydroxylase (310 aa).

Residues 134-232 (DDPDTLLIDT…YFEEVSQSES (99 aa)) enclose the Rhodanese domain. The Cysteine persulfide intermediate role is filled by Cys192.

Belongs to the TrhO family.

It catalyses the reaction uridine(34) in tRNA + AH2 + O2 = 5-hydroxyuridine(34) in tRNA + A + H2O. Its function is as follows. Catalyzes oxygen-dependent 5-hydroxyuridine (ho5U) modification at position 34 in tRNAs. This Prochlorococcus marinus (strain MIT 9303) protein is tRNA uridine(34) hydroxylase.